The chain runs to 503 residues: GMP synthase [glutamine-hydrolyzing] (503 aa).

The Glutamine amidotransferase type-1 domain maps to 1–189 (MVLVLDFGSQ…FLELAGVKRD (189 aa)). C78 serves as the catalytic Nucleophile. Catalysis depends on residues H164 and E166. Positions 190-378 (WTPEHVLEEL…LGLPDTLRLR (189 aa)) constitute a GMPS ATP-PPase domain. 217–223 (SGGVDSS) serves as a coordination point for ATP.

As to quaternary structure, homodimer.

The catalysed reaction is XMP + L-glutamine + ATP + H2O = GMP + L-glutamate + AMP + diphosphate + 2 H(+). It participates in purine metabolism; GMP biosynthesis; GMP from XMP (L-Gln route): step 1/1. Functionally, catalyzes the synthesis of GMP from XMP. This chain is GMP synthase [glutamine-hydrolyzing], found in Thermus thermophilus (strain ATCC 27634 / DSM 579 / HB8).